The sequence spans 231 residues: (S)-2-haloacid dehalogenase 4A (231 aa).

Aspartate 11 functions as the Nucleophile in the catalytic mechanism. An (S)-2-haloacid-binding positions include alanine 12 to tyrosine 13, arginine 42, and serine 119 to asparagine 120. Positions serine 176–aspartate 181 are important for catalytic activity.

The protein belongs to the HAD-like hydrolase superfamily. S-2-haloalkanoic acid dehalogenase family.

The enzyme catalyses an (S)-2-haloacid + H2O = a (2R)-2-hydroxycarboxylate + a halide anion + H(+). It catalyses the reaction (S)-2-chloropropanoate + H2O = (R)-lactate + chloride + H(+). Its function is as follows. Catalyzes the hydrolytic dehalogenation of small (S)-2-haloalkanoic acids to yield the corresponding (R)-2-hydroxyalkanoic acids. Acts on acids of short chain lengths, C(2) to C(4), with inversion of configuration at C-3. Active with 2-halogenated carboxylic acids and converts only the S-isomer (or L-isomer) of 2-chloropropionic acid with inversion of configuration to produce R-lactate (or D-isomer). The sequence is that of (S)-2-haloacid dehalogenase 4A from Burkholderia cepacia (Pseudomonas cepacia).